Here is a 112-residue protein sequence, read N- to C-terminus: Nitrogen regulatory protein P-II (112 aa).

The residue at position 51 (Y51) is an O-UMP-tyrosine.

This sequence belongs to the P(II) protein family. In terms of assembly, homotrimer.

In terms of biological role, in nitrogen-limiting conditions, when the ratio of Gln to 2-ketoglutarate decreases, P-II is uridylylated to P-II-UMP. P-II-UMP allows the deadenylation of glutamine synthetase (GS), thus activating the enzyme. Conversely, in nitrogen excess P-II is deuridylated and promotes the adenylation of GS. P-II indirectly controls the transcription of the GS gene (glnA). P-II prevents NR-II-catalyzed conversion of NR-I to NR-I-phosphate, the transcriptional activator of glnA. When P-II is uridylylated to P-II-UMP, these events are reversed. This is Nitrogen regulatory protein P-II (glnB) from Azospirillum brasilense.